The following is a 337-amino-acid chain: MSEKIAVLGAGSWGSILASVLDENGHDVRLWSYNPKQVEELNTQHTNTHYIKDFTFSPSLVAYSDLASALTDVDAILFVVPTKAIRSVAGQVATILQDQHLQPQLIHASKGIEQQTYKRLSQVLEEEIPAENRQAVTVLSGPSHAEDVARKDITLVTAASASPEAAKYVQKLFMTSYFRVYTNPDIIGVEIGAALKNIIALGAGALHGLGYGDNAKAALMTRGLAEISRLGTSFGADPMTFIGLSGVGDIIVTATSSNSRNWRAGDELGRGEALDDVINHMGMVIEGLATTKAAYELSRERGVSMPITEAIYQVIYEGKDIRTAISDLMQREGRSEF.

S12, W13, and K110 together coordinate NADPH. 3 residues coordinate sn-glycerol 3-phosphate: K110, G141, and S143. A145 is an NADPH binding site. Residues K196, D249, S259, R260, and N261 each coordinate sn-glycerol 3-phosphate. The active-site Proton acceptor is K196. R260 is a binding site for NADPH. NADPH-binding residues include V284 and E286.

This sequence belongs to the NAD-dependent glycerol-3-phosphate dehydrogenase family.

The protein resides in the cytoplasm. It catalyses the reaction sn-glycerol 3-phosphate + NAD(+) = dihydroxyacetone phosphate + NADH + H(+). It carries out the reaction sn-glycerol 3-phosphate + NADP(+) = dihydroxyacetone phosphate + NADPH + H(+). It participates in membrane lipid metabolism; glycerophospholipid metabolism. In terms of biological role, catalyzes the reduction of the glycolytic intermediate dihydroxyacetone phosphate (DHAP) to sn-glycerol 3-phosphate (G3P), the key precursor for phospholipid synthesis. This chain is Glycerol-3-phosphate dehydrogenase [NAD(P)+], found in Levilactobacillus brevis (strain ATCC 367 / BCRC 12310 / CIP 105137 / JCM 1170 / LMG 11437 / NCIMB 947 / NCTC 947) (Lactobacillus brevis).